The following is a 261-amino-acid chain: Phosphonates import ATP-binding protein PhnC (261 aa).

Residues 15 to 257 enclose the ABC transporter domain; it reads LCLENTSAVY…LERSAIPPKR (243 aa). Residue 48–55 participates in ATP binding; that stretch reads GPSGSGKS.

The protein belongs to the ABC transporter superfamily. Phosphonates importer (TC 3.A.1.9.1) family. As to quaternary structure, the complex is composed of two ATP-binding proteins (PhnC), two transmembrane proteins (PhnE) and a solute-binding protein (PhnD).

It is found in the cell inner membrane. It catalyses the reaction phosphonate(out) + ATP + H2O = phosphonate(in) + ADP + phosphate + H(+). Functionally, part of the ABC transporter complex PhnCDE involved in phosphonates import. Responsible for energy coupling to the transport system. This Hyphomonas neptunium (strain ATCC 15444) protein is Phosphonates import ATP-binding protein PhnC.